Consider the following 234-residue polypeptide: Ubiquinone biosynthesis O-methyltransferase (234 aa).

S-adenosyl-L-methionine contacts are provided by arginine 40, glycine 59, aspartate 80, and methionine 123.

Belongs to the methyltransferase superfamily. UbiG/COQ3 family.

It catalyses the reaction a 3-demethylubiquinol + S-adenosyl-L-methionine = a ubiquinol + S-adenosyl-L-homocysteine + H(+). It carries out the reaction a 3-(all-trans-polyprenyl)benzene-1,2-diol + S-adenosyl-L-methionine = a 2-methoxy-6-(all-trans-polyprenyl)phenol + S-adenosyl-L-homocysteine + H(+). The protein operates within cofactor biosynthesis; ubiquinone biosynthesis. Functionally, O-methyltransferase that catalyzes the 2 O-methylation steps in the ubiquinone biosynthetic pathway. The polypeptide is Ubiquinone biosynthesis O-methyltransferase (Coxiella burnetii (strain Dugway 5J108-111)).